The chain runs to 108 residues: MIVTTTDVIQGAVIDSYLGIVTAEIVYGSNFLRDFLAGIRDVIGGRTGSYERLFEQGQRKAIEELELRAQRLGANAVIGIEIDTGTINVDQSGVLLLITATGTAVRVR.

Belongs to the UPF0145 family.

This is UPF0145 protein alr2488 from Nostoc sp. (strain PCC 7120 / SAG 25.82 / UTEX 2576).